A 271-amino-acid polypeptide reads, in one-letter code: Small ribosomal subunit protein uS2 (271 aa).

The disordered stretch occupies residues Arg223 to Lys271. The segment covering Met253–Lys271 has biased composition (acidic residues).

It belongs to the universal ribosomal protein uS2 family.

In Wolinella succinogenes (strain ATCC 29543 / DSM 1740 / CCUG 13145 / JCM 31913 / LMG 7466 / NCTC 11488 / FDC 602W) (Vibrio succinogenes), this protein is Small ribosomal subunit protein uS2.